A 528-amino-acid chain; its full sequence is Homoserine O-acetyltransferase (528 aa).

The AB hydrolase-1 domain maps to 60-245 (LVICHALTGS…AALLTYRSRD (186 aa)). Residue Ser-154 is the Nucleophile of the active site. 2 disordered regions span residues 250 to 335 (RFGR…VKTQ) and 388 to 413 (DLSA…DATE). Over residues 273–282 (QETTDPSVPS) the composition is skewed to polar residues. A compositionally biased stretch (basic and acidic residues) spans 295–304 (AWREHNDGHR). The segment covering 389–409 (LSAPSRDTSLSSLSSGLPSSP) has biased composition (low complexity). Active-site residues include Asp-438 and His-467.

This sequence belongs to the AB hydrolase superfamily. MetX family.

It localises to the cytoplasm. The catalysed reaction is L-homoserine + acetyl-CoA = O-acetyl-L-homoserine + CoA. Its pathway is amino-acid biosynthesis; L-methionine biosynthesis via de novo pathway; O-acetyl-L-homoserine from L-homoserine: step 1/1. Its activity is regulated as follows. Inhibited by 6-carbamoyl-3a,4,5,9b-tetrahydro-3H-cyclopenta[ c]quinoline-4-carboxylic acid (CTCQC). In terms of biological role, commits homoserine to the methionine biosynthesis pathway by catalyzing its O-acetylation. The sequence is that of Homoserine O-acetyltransferase from Cryptococcus neoformans var. grubii serotype A (strain H99 / ATCC 208821 / CBS 10515 / FGSC 9487) (Filobasidiella neoformans var. grubii).